The sequence spans 441 residues: GTPase Der (441 aa).

2 EngA-type G domains span residues 4–169 (PVVA…PEDI) and 178–353 (IKVA…DQAA). Residues 10–17 (GRPNVGKS), 57–61 (DTGGI), 120–123 (NKVD), 184–191 (GKPNAGKS), 231–235 (DTAGI), and 296–299 (NKWD) each bind GTP. Positions 354–438 (FRISTGMLND…PIRFIHRQRE (85 aa)) constitute a KH-like domain.

It belongs to the TRAFAC class TrmE-Era-EngA-EngB-Septin-like GTPase superfamily. EngA (Der) GTPase family. As to quaternary structure, associates with the 50S ribosomal subunit.

Functionally, GTPase that plays an essential role in the late steps of ribosome biogenesis. The protein is GTPase Der of Ruminiclostridium cellulolyticum (strain ATCC 35319 / DSM 5812 / JCM 6584 / H10) (Clostridium cellulolyticum).